The sequence spans 348 residues: D-alanine--D-alanine ligase (348 aa).

An ATP-grasp domain is found at 132-334 (KRILEVAGVP…YSDLIKELVV (203 aa)). 162-217 (LEKLTFPVFVKPANMGSSVGISKAENESELRSAIDLALKYDSRILIEQGVVAREIE) serves as a coordination point for ATP. Mg(2+) contacts are provided by Asp-288, Glu-301, and Asn-303.

This sequence belongs to the D-alanine--D-alanine ligase family. Requires Mg(2+) as cofactor. The cofactor is Mn(2+).

The protein resides in the cytoplasm. The catalysed reaction is 2 D-alanine + ATP = D-alanyl-D-alanine + ADP + phosphate + H(+). It functions in the pathway cell wall biogenesis; peptidoglycan biosynthesis. In terms of biological role, cell wall formation. This is D-alanine--D-alanine ligase from Streptococcus thermophilus (strain ATCC BAA-250 / LMG 18311).